The following is a 217-amino-acid chain: 3,4-dihydroxy-2-butanone 4-phosphate synthase (217 aa).

D-ribulose 5-phosphate is bound by residues 37–38 (RE), D42, 150–154 (RGGHT), and E174. E38 serves as a coordination point for Mg(2+). H153 is a binding site for Mg(2+).

The protein belongs to the DHBP synthase family. Homodimer. Mg(2+) is required as a cofactor. The cofactor is Mn(2+).

The catalysed reaction is D-ribulose 5-phosphate = (2S)-2-hydroxy-3-oxobutyl phosphate + formate + H(+). It participates in cofactor biosynthesis; riboflavin biosynthesis; 2-hydroxy-3-oxobutyl phosphate from D-ribulose 5-phosphate: step 1/1. Catalyzes the conversion of D-ribulose 5-phosphate to formate and 3,4-dihydroxy-2-butanone 4-phosphate. The sequence is that of 3,4-dihydroxy-2-butanone 4-phosphate synthase from Citrobacter koseri (strain ATCC BAA-895 / CDC 4225-83 / SGSC4696).